Here is a 104-residue protein sequence, read N- to C-terminus: Large ribosomal subunit protein bL21 (104 aa).

This sequence belongs to the bacterial ribosomal protein bL21 family. In terms of assembly, part of the 50S ribosomal subunit. Contacts protein L20.

In terms of biological role, this protein binds to 23S rRNA in the presence of protein L20. This chain is Large ribosomal subunit protein bL21, found in Streptococcus pyogenes serotype M1.